Reading from the N-terminus, the 258-residue chain is Exu regulon transcriptional regulator (258 aa).

The 69-residue stretch at 7–75 folds into the HTH gntR-type domain; the sequence is RRLYQQLAAD…KGSGIHVVSN (69 aa). The segment at residues 35–54 is a DNA-binding region (H-T-H motif); it reads ERFIADEKNVSRTVVREAII.

Functionally, repressor for the exu regulon that encode genes involved in hexuronate utilization. It regulates the ExuT, UxaCA and UxuRAB operons. Binds D-tagaturonate and D-fructuronate as inducers. The sequence is that of Exu regulon transcriptional regulator (exuR) from Escherichia coli O157:H7.